A 114-amino-acid polypeptide reads, in one-letter code: Protein yippee-like (114 aa).

Residues 14 to 111 (RTYSCVHCRA…IELAHMIKEN (98 aa)) enclose the Yippee domain. Positions 18, 21, 74, and 77 each coordinate Zn(2+).

Belongs to the yippee family.

In terms of biological role, involved in regulating synaptic transmission in presynaptic neurons. In class IV dendritic arborization neurons (nociceptors), involved in regulating activation of their second-order neurons (SONs) and maintaining synaptic contact between nociceptors and their SONs. The sequence is that of Protein yippee-like from Drosophila melanogaster (Fruit fly).